The following is a 271-amino-acid chain: Formamidopyrimidine-DNA glycosylase (271 aa).

The Schiff-base intermediate with DNA role is filled by Pro-2. Glu-3 acts as the Proton donor in catalysis. Catalysis depends on Lys-57, which acts as the Proton donor; for beta-elimination activity. DNA contacts are provided by His-90, Arg-109, and Lys-150. The segment at 235 to 269 (LVYGNKDKPCPKCGGKIESLIIGQRNSFFCPKCQK) adopts an FPG-type zinc-finger fold. Arg-259 serves as the catalytic Proton donor; for delta-elimination activity.

The protein belongs to the FPG family. In terms of assembly, monomer. Requires Zn(2+) as cofactor.

It catalyses the reaction Hydrolysis of DNA containing ring-opened 7-methylguanine residues, releasing 2,6-diamino-4-hydroxy-5-(N-methyl)formamidopyrimidine.. The enzyme catalyses 2'-deoxyribonucleotide-(2'-deoxyribose 5'-phosphate)-2'-deoxyribonucleotide-DNA = a 3'-end 2'-deoxyribonucleotide-(2,3-dehydro-2,3-deoxyribose 5'-phosphate)-DNA + a 5'-end 5'-phospho-2'-deoxyribonucleoside-DNA + H(+). Involved in base excision repair of DNA damaged by oxidation or by mutagenic agents. Acts as a DNA glycosylase that recognizes and removes damaged bases. Has a preference for oxidized purines, such as 7,8-dihydro-8-oxoguanine (8-oxoG). Has AP (apurinic/apyrimidinic) lyase activity and introduces nicks in the DNA strand. Cleaves the DNA backbone by beta-delta elimination to generate a single-strand break at the site of the removed base with both 3'- and 5'-phosphates. The protein is Formamidopyrimidine-DNA glycosylase of Haemophilus influenzae (strain 86-028NP).